A 477-amino-acid polypeptide reads, in one-letter code: Ribulose bisphosphate carboxylase large chain (477 aa).

The propeptide occupies 1–2 (MS). Pro3 carries the N-acetylproline modification. Lys14 is subject to N6,N6,N6-trimethyllysine. Residues Asn123 and Thr173 each contribute to the substrate site. Lys175 serves as the catalytic Proton acceptor. Substrate is bound at residue Lys177. Mg(2+) contacts are provided by Lys201, Asp203, and Glu204. The residue at position 201 (Lys201) is an N6-carboxylysine. Catalysis depends on His294, which acts as the Proton acceptor. 3 residues coordinate substrate: Arg295, His327, and Ser379.

Belongs to the RuBisCO large chain family. Type I subfamily. In terms of assembly, heterohexadecamer of 8 large chains and 8 small chains; disulfide-linked. The disulfide link is formed within the large subunit homodimers. Mg(2+) is required as a cofactor. In terms of processing, the disulfide bond which can form in the large chain dimeric partners within the hexadecamer appears to be associated with oxidative stress and protein turnover.

It localises to the plastid. It is found in the chloroplast. It catalyses the reaction 2 (2R)-3-phosphoglycerate + 2 H(+) = D-ribulose 1,5-bisphosphate + CO2 + H2O. The enzyme catalyses D-ribulose 1,5-bisphosphate + O2 = 2-phosphoglycolate + (2R)-3-phosphoglycerate + 2 H(+). In terms of biological role, ruBisCO catalyzes two reactions: the carboxylation of D-ribulose 1,5-bisphosphate, the primary event in carbon dioxide fixation, as well as the oxidative fragmentation of the pentose substrate in the photorespiration process. Both reactions occur simultaneously and in competition at the same active site. This is Ribulose bisphosphate carboxylase large chain from Nicotiana otophora (Tobacco).